We begin with the raw amino-acid sequence, 126 residues long: Ejaculatory bulb-specific protein 3 (126 aa).

Positions 1–17 are cleaved as a signal peptide; the sequence is MKMILALVVLGLVLVAA.

The protein belongs to the insect A10/OS-D protein family. As to expression, specifically expressed in the ejaculatory bulb and seminal fluid.

It localises to the secreted. Protein component of the posterior mating plug. The sequence is that of Ejaculatory bulb-specific protein 3 from Drosophila melanogaster (Fruit fly).